The chain runs to 504 residues: ATP synthase subunit alpha (504 aa).

Residue 169 to 176 coordinates ATP; that stretch reads GDRQTGKT.

The protein belongs to the ATPase alpha/beta chains family. In terms of assembly, F-type ATPases have 2 components, CF(1) - the catalytic core - and CF(0) - the membrane proton channel. CF(1) has five subunits: alpha(3), beta(3), gamma(1), delta(1), epsilon(1). CF(0) has three main subunits: a(1), b(2) and c(9-12). The alpha and beta chains form an alternating ring which encloses part of the gamma chain. CF(1) is attached to CF(0) by a central stalk formed by the gamma and epsilon chains, while a peripheral stalk is formed by the delta and b chains.

The protein resides in the cell membrane. The catalysed reaction is ATP + H2O + 4 H(+)(in) = ADP + phosphate + 5 H(+)(out). In terms of biological role, produces ATP from ADP in the presence of a proton gradient across the membrane. The alpha chain is a regulatory subunit. The sequence is that of ATP synthase subunit alpha from Clostridium kluyveri (strain ATCC 8527 / DSM 555 / NBRC 12016 / NCIMB 10680 / K1).